Consider the following 124-residue polypeptide: MHELSYANAMLEAILNSIKKEEEKGKKIKKVTEINLEVGELTFINVEQLKFAFEVIAEGTVCEGAKINVEFIKPKCKCLDCGYEGEPEILDEFEVYCPKCKSIRLKLSGGKEFNIKNATVEYED.

Residue H2 participates in Ni(2+) binding. Residues C78, C81, C97, and C100 each contribute to the Zn(2+) site.

The protein belongs to the HypA/HybF family.

Functionally, involved in the maturation of [NiFe] hydrogenases. Required for nickel insertion into the metal center of the hydrogenase. The polypeptide is Hydrogenase maturation factor HypA (Methanocaldococcus jannaschii (strain ATCC 43067 / DSM 2661 / JAL-1 / JCM 10045 / NBRC 100440) (Methanococcus jannaschii)).